A 345-amino-acid polypeptide reads, in one-letter code: uncharacterized protein (345 aa).

2 disordered regions span residues 1 to 24 and 296 to 345; these read MGLE…ENRK and MTAH…LNES. A compositionally biased stretch (acidic residues) spans 304 to 323; it reads SDYDNDDDTDGIINETDYEL. Polar residues predominate over residues 324–345; it reads DTSQSEFATLTTSSNKSILNES.

This is an uncharacterized protein from Schizosaccharomyces pombe (strain 972 / ATCC 24843) (Fission yeast).